The primary structure comprises 343 residues: Holliday junction branch migration complex subunit RuvB (343 aa).

A large ATPase domain (RuvB-L) region spans residues 1-178 (MNFVQQNREG…FGMILELQFY (178 aa)). Residues leucine 17, arginine 18, glycine 59, lysine 62, threonine 63, threonine 64, 125–127 (EDY), arginine 168, tyrosine 178, and arginine 215 each bind ATP. A Mg(2+)-binding site is contributed by threonine 63. A small ATPAse domain (RuvB-S) region spans residues 179-249 (TVKELMEIIK…LVEKTMDILE (71 aa)). A head domain (RuvB-H) region spans residues 252–343 (KLGLDEMDRK…DESLRKSDES (92 aa)). DNA contacts are provided by arginine 307 and arginine 312.

This sequence belongs to the RuvB family. Homohexamer. Forms an RuvA(8)-RuvB(12)-Holliday junction (HJ) complex. HJ DNA is sandwiched between 2 RuvA tetramers; dsDNA enters through RuvA and exits via RuvB. An RuvB hexamer assembles on each DNA strand where it exits the tetramer. Each RuvB hexamer is contacted by two RuvA subunits (via domain III) on 2 adjacent RuvB subunits; this complex drives branch migration. In the full resolvosome a probable DNA-RuvA(4)-RuvB(12)-RuvC(2) complex forms which resolves the HJ.

Its subcellular location is the cytoplasm. The catalysed reaction is ATP + H2O = ADP + phosphate + H(+). In terms of biological role, the RuvA-RuvB-RuvC complex processes Holliday junction (HJ) DNA during genetic recombination and DNA repair, while the RuvA-RuvB complex plays an important role in the rescue of blocked DNA replication forks via replication fork reversal (RFR). RuvA specifically binds to HJ cruciform DNA, conferring on it an open structure. The RuvB hexamer acts as an ATP-dependent pump, pulling dsDNA into and through the RuvAB complex. RuvB forms 2 homohexamers on either side of HJ DNA bound by 1 or 2 RuvA tetramers; 4 subunits per hexamer contact DNA at a time. Coordinated motions by a converter formed by DNA-disengaged RuvB subunits stimulates ATP hydrolysis and nucleotide exchange. Immobilization of the converter enables RuvB to convert the ATP-contained energy into a lever motion, pulling 2 nucleotides of DNA out of the RuvA tetramer per ATP hydrolyzed, thus driving DNA branch migration. The RuvB motors rotate together with the DNA substrate, which together with the progressing nucleotide cycle form the mechanistic basis for DNA recombination by continuous HJ branch migration. Branch migration allows RuvC to scan DNA until it finds its consensus sequence, where it cleaves and resolves cruciform DNA. The protein is Holliday junction branch migration complex subunit RuvB of Pseudothermotoga lettingae (strain ATCC BAA-301 / DSM 14385 / NBRC 107922 / TMO) (Thermotoga lettingae).